Consider the following 199-residue polypeptide: BREX protein BrxA (199 aa).

The protein belongs to the BrxA family.

Functionally, BREX systems (bacteriophage exclusion) provide immunity against bacteriophage. Part of a type 1 BREX system which protects against dsDNA phage. This system allows phage adsorption but prevents phage DNA replication, without degradation of the phage DNA. Methylation of bacterial DNA by PglX guides self/non-self discrimination. This is BREX protein BrxA from Paramagnetospirillum magneticum (strain ATCC 700264 / AMB-1) (Magnetospirillum magneticum).